A 3567-amino-acid chain; its full sequence is Erythronolide synthase EryA2 (3567 aa).

Residues 30-455 (SDPIAIVSMA…GTNAHVIVEE (426 aa)) form the Ketosynthase family 3 (KS3) 1 domain. Module stretches follow at residues 33–1467 (IAIV…QHLR) and 1491–3485 (IAIV…EHLR). The active-site Acyl-thioester intermediate; for beta-ketoacyl synthase 1 activity is the cysteine 202. Residues histidine 337 and histidine 377 each act as for beta-ketoacyl synthase 1 activity in the active site. Positions 560 to 880 (VFLFPGQGSQ…MATAHVSGVD (321 aa)) are acyltransferase 1. Catalysis depends on serine 651, which acts as the Acyl-ester intermediate; for acyltransferase 1 activity. The tract at residues 1132-1297 (GTVLVTGAAS…CTSVAWTPWA (166 aa)) is C2-type beta-ketoacyl reductase 1. Catalysis depends on tyrosine 1267, which acts as the For C2-type beta-ketoacyl reductase 1 and probable racemase activity. The tract at residues 1364 to 1385 (GRGGQAEAEPDSGPTGEPAQRL) is disordered. Positions 1395–1470 (ENLLELVANA…ALAQHLRARL (76 aa)) constitute a Carrier 1 domain. At serine 1430 the chain carries O-(pantetheine 4'-phosphoryl)serine. The Ketosynthase family 3 (KS3) 2 domain maps to 1488 to 1912 (SEPIAIVGIG…GTNAHVIVEE (425 aa)). Cysteine 1661 serves as the catalytic Acyl-thioester intermediate; for beta-ketoacyl synthase 2 activity. Residues histidine 1796 and histidine 1834 each act as for beta-ketoacyl synthase 2 activity in the active site. An acyltransferase 2 region spans residues 2015 to 2331 (LVFPGQGAQW…NLLRAHVHGV (317 aa)). Residue serine 2105 is the Acyl-ester intermediate; for acyltransferase 2 activity of the active site. The segment at 2377 to 2502 (HPLLLAAVDV…GTLAQGVAAG (126 aa)) is N-terminal hotdog fold. The dehydratase stretch occupies residues 2377–2645 (HPLLLAAVDV…SLVVRSTGEK (269 aa)). In terms of domain architecture, PKS/mFAS DH spans 2377 to 2648 (HPLLLAAVDV…VRSTGEKWEQ (272 aa)). The active-site Proton acceptor; for dehydratase activity is the histidine 2409. The segment at 2514 to 2648 (AVRIPLDDHY…VRSTGEKWEQ (135 aa)) is C-terminal hotdog fold. Residue aspartate 2571 is the Proton donor; for dehydratase activity of the active site. The enoyl reductase stretch occupies residues 2831–3131 (GAIDSVAFEP…RGRHVGKLVL (301 aa)). The active-site For enoyl reductase activity is tyrosine 2874. Residues 2964-2973 (HAAAGGVGMA), 3149-3152 (TGTL), 3173-3176 (SRRG), 3202-3203 (DT), lysine 3250, and 3272-3273 (FS) contribute to the NADP(+) site. The interval 3141–3317 (GTVLITGGTG…AKALGWGLWA (177 aa)) is beta-ketoacyl reductase 2. Tyrosine 3287 acts as the For beta-ketoacyl reductase 2 activity in catalysis. The 76-residue stretch at 3413-3488 (AGLAELVRSH…AVAEHLRDRL (76 aa)) folds into the Carrier 2 domain. The residue at position 3448 (serine 3448) is an O-(pantetheine 4'-phosphoryl)serine.

Homodimer. Erythronolide synthase is composed of EryAI, EryAII and EryAIII multimodular (2 modules) polypeptides each coding for a functional synthase subunit which participates in 2 of the six FAS-like elongation steps required for formation of the polyketide. Module 1, 2, 3, 4, 5, and 6 participating in biosynthesis steps 1, 2, 3, 4, 5, and 6, respectively. Requires pantetheine 4'-phosphate as cofactor.

It carries out the reaction 6 (S)-methylmalonyl-CoA + propanoyl-CoA + 6 NADPH + 12 H(+) = 6-deoxyerythronolide B + 6 CO2 + 6 NADP(+) + 7 CoA + H2O. Its pathway is antibiotic biosynthesis; erythromycin biosynthesis. Involved in the biosynthesis of antibiotic erythromycin via the biosynthesis of its aglycone precursor, 6-deoxyerythronolide B (6-dEB). The chain is Erythronolide synthase EryA2 from Saccharopolyspora erythraea (Streptomyces erythraeus).